The following is a 341-amino-acid chain: MKALSKLKAEEGIWMTDVPVPELGHNDLLIKIRKTAICGTDVHIYNWDEWSQKTIPVPMVVGHEYVGEVVGIGQEVKGFMIGDRVSGEGHITCGHCRNCRGGRTHLCRNTIGVGVNRPGCFAEYLVIPAFNAFKIPDNISDDLASIFDPFGNAVHTALSFDLVGEDVLVSGAGPIGIMAAAVAKHVGARNVVITDVNEYRLELARKMGITRAVNVAKENLNDVMAELGMTEGFDVGLEMPGAPPAFRTMLDTMNHGGRIAMLGIPPSDMSIDWTKVIFKGLFIKGIYGREMFETWYKMAALIQSGLDLSPIITHRFSIDDFQKGFDAMRSGQSGKVILSWD.

Zn(2+) is bound at residue C38. Residues T40 and H43 each act as charge relay system in the active site. 6 residues coordinate Zn(2+): H63, E64, C93, C96, C99, and C107. NAD(+) contacts are provided by residues I175, D195, R200, 262–264 (LGI), and 286–287 (IY).

This sequence belongs to the zinc-containing alcohol dehydrogenase family. Homotetramer. It depends on Zn(2+) as a cofactor.

It is found in the cytoplasm. It catalyses the reaction L-threonine + NAD(+) = (2S)-2-amino-3-oxobutanoate + NADH + H(+). The protein operates within amino-acid degradation; L-threonine degradation via oxydo-reductase pathway; glycine from L-threonine: step 1/2. Catalyzes the NAD(+)-dependent oxidation of L-threonine to 2-amino-3-ketobutyrate. This Escherichia coli O139:H28 (strain E24377A / ETEC) protein is L-threonine 3-dehydrogenase.